Consider the following 217-residue polypeptide: Probable septum site-determining protein MinC (217 aa).

This sequence belongs to the MinC family. As to quaternary structure, interacts with MinD and FtsZ.

Functionally, cell division inhibitor that blocks the formation of polar Z ring septums. Rapidly oscillates between the poles of the cell to destabilize FtsZ filaments that have formed before they mature into polar Z rings. Prevents FtsZ polymerization. The polypeptide is Probable septum site-determining protein MinC (Pelotomaculum thermopropionicum (strain DSM 13744 / JCM 10971 / SI)).